The sequence spans 198 residues: Protein GrpE (198 aa).

The protein belongs to the GrpE family. Homodimer.

The protein localises to the cytoplasm. Participates actively in the response to hyperosmotic and heat shock by preventing the aggregation of stress-denatured proteins, in association with DnaK and GrpE. It is the nucleotide exchange factor for DnaK and may function as a thermosensor. Unfolded proteins bind initially to DnaJ; upon interaction with the DnaJ-bound protein, DnaK hydrolyzes its bound ATP, resulting in the formation of a stable complex. GrpE releases ADP from DnaK; ATP binding to DnaK triggers the release of the substrate protein, thus completing the reaction cycle. Several rounds of ATP-dependent interactions between DnaJ, DnaK and GrpE are required for fully efficient folding. The sequence is that of Protein GrpE from Actinobacillus pleuropneumoniae serotype 7 (strain AP76).